The following is a 341-amino-acid chain: KH domain-containing RNA-binding protein QKI (341 aa).

Positions 11–82 are qua1 domain; involved in homodimerization; sequence PKPTPDYLMQ…PDAVGPIVQL (72 aa). The KH domain maps to 87-153; sequence YVPVKEYPDF…WEHLNEDLHV (67 aa). The tract at residues 182-213 is qua2 domain; involved in RNA binding; the sequence is AAEGEDSLKKMQLMELAILNGTYRDANIKSPA. Ser188 carries the phosphoserine modification. Arg227 is modified (omega-N-methylarginine). Arg242 carries the asymmetric dimethylarginine; by CARM1; alternate modification. At Arg242 the chain carries Omega-N-methylarginine; alternate. The residue at position 256 (Arg256) is an Omega-N-methylarginine. Positions 276–279 match the SH3-binding motif; it reads PPGP. The short motif at 324–330 is the Nuclear localization signal element; that stretch reads RVHPYQR.

It belongs to the quaking family. In terms of assembly, homodimer; does not require RNA to homodimerize. Able to heterodimerize with BICC1. Methylated by PRMT1. Post-translationally, tyrosine phosphorylated at its C-terminus, probably by FYN. Phosphorylation leads to decreased mRNA-binding affinity, affecting transport and/or stabilization of MBP mRNA. In terms of processing, ubiquitinated by RNF6 in macrophages, leading to its degradation.

Its subcellular location is the nucleus. The protein localises to the cytoplasm. Functionally, RNA reader protein, which recognizes and binds specific RNAs, thereby regulating RNA metabolic processes, such as pre-mRNA splicing, circular RNA (circRNA) formation, mRNA export, mRNA stability and/or translation. Involved in various cellular processes, such as mRNA storage into stress granules, apoptosis, lipid deposition, interferon response, glial cell fate and development. Binds to the 5'-NACUAAY-N(1,20)-UAAY-3' RNA core sequence. Acts as a mRNA modification reader that specifically recognizes and binds mRNA transcripts modified by internal N(7)-methylguanine (m7G). Promotes the formation of circular RNAs (circRNAs) during the epithelial to mesenchymal transition and in cardiomyocytes: acts by binding to sites flanking circRNA-forming exons. CircRNAs are produced by back-splicing circularization of pre-mRNAs. Plays a central role in myelinization via 3 distinct mechanisms. First, acts by protecting and promoting stability of target mRNAs such as MBP, SIRT2 and CDKN1B, which promotes oligodendrocyte differentiation. Second, participates in mRNA transport by regulating the nuclear export of MBP mRNA. Finally, indirectly regulates mRNA splicing of MAG pre-mRNA during oligodendrocyte differentiation by acting as a negative regulator of MAG exon 12 alternative splicing: acts by binding to HNRNPA1 mRNA splicing factor, preventing its translation. Involved in microglia differentiation and remyelination by regulating microexon alternative splicing of the Rho GTPase pathway. Involved in macrophage differentiation: promotes monocyte differentiation by regulating pre-mRNA splicing in naive peripheral blood monocytes. Acts as an important regulator of muscle development: required for the contractile function of cardiomyocytes by regulating alternative splicing of cardiomyocyte transcripts. Acts as a negative regulator of thermogenesis by decreasing stability, nuclear export and translation of mRNAs encoding PPARGC1A and UCP1. Also required for visceral endoderm function and blood vessel development. May also play a role in smooth muscle development. In addition to its RNA-binding activity, also acts as a nuclear transcription coactivator for SREBF2/SREBP2. In Bos taurus (Bovine), this protein is KH domain-containing RNA-binding protein QKI.